The following is a 387-amino-acid chain: 8-amino-7-oxononanoate synthase (387 aa).

R19 serves as a coordination point for substrate. 106–107 (GY) provides a ligand contact to pyridoxal 5'-phosphate. Residue H131 coordinates substrate. Pyridoxal 5'-phosphate contacts are provided by S177, H205, and T234. K237 carries the post-translational modification N6-(pyridoxal phosphate)lysine. T351 is a binding site for substrate.

Belongs to the class-II pyridoxal-phosphate-dependent aminotransferase family. BioF subfamily. As to quaternary structure, homodimer. The cofactor is pyridoxal 5'-phosphate.

The enzyme catalyses 6-carboxyhexanoyl-[ACP] + L-alanine + H(+) = (8S)-8-amino-7-oxononanoate + holo-[ACP] + CO2. Its pathway is cofactor biosynthesis; biotin biosynthesis. Catalyzes the decarboxylative condensation of pimeloyl-[acyl-carrier protein] and L-alanine to produce 8-amino-7-oxononanoate (AON), [acyl-carrier protein], and carbon dioxide. In Methylococcus capsulatus (strain ATCC 33009 / NCIMB 11132 / Bath), this protein is 8-amino-7-oxononanoate synthase.